The following is a 172-amino-acid chain: NADH-quinone oxidoreductase subunit B (172 aa).

[4Fe-4S] cluster-binding residues include Cys52, Cys53, Cys117, and Cys147.

The protein belongs to the complex I 20 kDa subunit family. As to quaternary structure, NDH-1 is composed of 14 different subunits. Subunits NuoB, C, D, E, F, and G constitute the peripheral sector of the complex. The cofactor is [4Fe-4S] cluster.

It localises to the cell inner membrane. The enzyme catalyses a quinone + NADH + 5 H(+)(in) = a quinol + NAD(+) + 4 H(+)(out). In terms of biological role, NDH-1 shuttles electrons from NADH, via FMN and iron-sulfur (Fe-S) centers, to quinones in the respiratory chain. Couples the redox reaction to proton translocation (for every two electrons transferred, four hydrogen ions are translocated across the cytoplasmic membrane), and thus conserves the redox energy in a proton gradient. The chain is NADH-quinone oxidoreductase subunit B from Ehrlichia ruminantium (strain Gardel).